We begin with the raw amino-acid sequence, 575 residues long: Hemagglutinin-neuraminidase (575 aa).

A compositionally biased stretch (basic and acidic residues) spans 1–10; the sequence is MDGDRGKRDS. The interval 1 to 27 is disordered; the sequence is MDGDRGKRDSYWSTSPSGSTTKPASGW. At 1–37 the chain is on the intravirion side; it reads MDGDRGKRDSYWSTSPSGSTTKPASGWERSSKADTWL. Positions 10–14 are incorporation in virion; sequence SYWST. The segment covering 11–23 has biased composition (polar residues); that stretch reads YWSTSPSGSTTKP. The helical; Signal-anchor for type II membrane protein transmembrane segment at 38–58 threads the bilayer; the sequence is LILSFTQWALSIATVIICIII. The interval 59-140 is interaction with F protein; it reads SARQGYSMKE…RQELTQHCES (82 aa). Over 59-575 the chain is Virion surface; that stretch reads SARQGYSMKE…SIPKLCKAES (517 aa). N-linked (GlcNAc...) asparagine; by host glycosylation occurs at Asn-77. 4 disulfides stabilise this stretch: Cys-192-Cys-216, Cys-258-Cys-271, Cys-357-Cys-469, and Cys-463-Cys-473. Residues 254–259 form an involved in neuraminidase activity region; that stretch reads NRKSCS. Residues Asn-499 and Asn-511 are each glycosylated (N-linked (GlcNAc...) asparagine; by host). Cys-535 and Cys-544 form a disulfide bridge.

Belongs to the paramyxoviruses hemagglutinin-neuraminidase family. Homotetramer; composed of disulfide-linked homodimers. Interacts with F protein trimer. Post-translationally, N-glycosylated; glycans consist of a mixture of high mannose-type oligosaccharides and of complex-type oligosaccharides.

The protein localises to the virion membrane. It is found in the host cell membrane. It carries out the reaction Hydrolysis of alpha-(2-&gt;3)-, alpha-(2-&gt;6)-, alpha-(2-&gt;8)- glycosidic linkages of terminal sialic acid residues in oligosaccharides, glycoproteins, glycolipids, colominic acid and synthetic substrates.. Attaches the virus to sialic acid-containing cell receptors and thereby initiating infection. Binding of HN protein to the receptor induces a conformational change that allows the F protein to trigger virion/cell membranes fusion. In terms of biological role, neuraminidase activity ensures the efficient spread of the virus by dissociating the mature virions from the neuraminic acid containing glycoproteins. The protein is Hemagglutinin-neuraminidase (HN) of Sendai virus (strain Z) (SeV).